Reading from the N-terminus, the 603-residue chain is Beta-glucuronidase (603 aa).

D-glucuronate contacts are provided by Asp-163 and Asn-412. The active-site Proton donor is the Glu-413. Residues Asn-466, Tyr-472, Glu-504, Trp-549, and Lys-568 each coordinate D-glucuronate. Residue Glu-504 is the Nucleophile of the active site. The short motif at 566 to 568 is the N-K motif element; it reads NKK.

It belongs to the glycosyl hydrolase 2 family. As to quaternary structure, homotetramer.

The enzyme catalyses a beta-D-glucuronoside + H2O = D-glucuronate + an alcohol. The catalysed reaction is 4-methylumbelliferone beta-D-glucuronate + H2O = 4-methylumbelliferone + D-glucuronate. With respect to regulation, potently inhibited by a set of synthetic compounds like thio-urea derivatives and analogs, and uronic isofagomine (UIFG) derivatives. Inhibitors of gut microbial beta-glucuronidases block the reactivation of glucuronidated cancer drugs, and thereby alleviate drug-induced GI toxicity. Displays beta-glucuronidase activity with the artificial substrate p-nitrophenyl-beta-D-glucuronide (PNPG) and with 4-methylumbelliferyl-glucuronide. Is likely capable of scavenging glucuronate from a range of chemically distinct xenobiotic and endobiotic glucuronides present in the gastrointestinal (GI) tract, to be able to utilize these diverse sources of carbon. As part of the GI microbiome, this enzyme is able to reactivate glucuronide drug conjugates, such reactivated compounds can significantly damage the GI tract. This chain is Beta-glucuronidase (uidA), found in Escherichia coli (strain K12).